Consider the following 245-residue polypeptide: Vacuolar iron transporter (245 aa).

Residues M1 to D28 are Cytoplasmic-facing. The helical transmembrane segment at I29–G49 threads the bilayer. The Vacuolar segment spans residues A50–S55. The helical transmembrane segment at I56–G76 threads the bilayer. The Cytoplasmic portion of the chain corresponds to Y77–T162. Fe cation is bound by residues E94, E97, E105, E108, M141, and E145. The helical transmembrane segment at I163 to I183 threads the bilayer. The Vacuolar segment spans residues A184–K186. Residues A187–G207 traverse the membrane as a helical segment. Topologically, residues Y208–P214 are cytoplasmic. The chain crosses the membrane as a helical span at residues V215–M235. The Vacuolar portion of the chain corresponds to A236–E245.

This sequence belongs to the CCC1 family. Expressed in petal tissues, but not in other parts of the plant, such as leaves, roots, sepals and stems.

The protein resides in the vacuole membrane. The catalysed reaction is Fe(2+)(in) = Fe(2+)(out). Its function is as follows. Vacuolar iron transporter involved in the transfer of iron ions from the cytosol to the vacuole for intracellular iron storage. Plays an essential role in the development of blue coloration in cornflower petals. This is Vacuolar iron transporter from Centaurea cyanus (Garden cornflower).